The chain runs to 75 residues: Small capsomere-interacting protein (75 aa).

Belongs to the herpesviridae small capsomere-interacting protein family. In terms of assembly, interacts with the major capsid protein/MCP.

Its subcellular location is the virion. The protein localises to the host nucleus. Functionally, participates in the assembly of the infectious particles by decorating the outer surface of the capsid shell and thus forming a layer between the capsid and the tegument. Complexes composed of the major capsid protein and small capsomere-interacting protein/SCP assemble together in the host cytoplasm and are translocated to the nucleus, where they accumulate and participate in capsid assembly. The polypeptide is Small capsomere-interacting protein (Homo sapiens (Human)).